The chain runs to 270 residues: SURF1-like protein (270 aa).

The next 2 helical transmembrane spans lie at 7–29 and 246–265; these read GFKL…VYRY and YIGT…FRYM.

This sequence belongs to the SURF1 family.

Its subcellular location is the mitochondrion inner membrane. Its function is as follows. Probably involved in the biogenesis of the COX complex. This chain is SURF1-like protein (surf1-1), found in Dictyostelium discoideum (Social amoeba).